Reading from the N-terminus, the 130-residue chain is Small ribosomal subunit protein uS11 (130 aa).

Residues 1–15 show a composition bias toward basic residues; it reads MARPTKKSGPRKQKR. The disordered stretch occupies residues 1–21; the sequence is MARPTKKSGPRKQKRNVPSGV.

The protein belongs to the universal ribosomal protein uS11 family. In terms of assembly, part of the 30S ribosomal subunit. Interacts with proteins S7 and S18. Binds to IF-3.

In terms of biological role, located on the platform of the 30S subunit, it bridges several disparate RNA helices of the 16S rRNA. Forms part of the Shine-Dalgarno cleft in the 70S ribosome. The sequence is that of Small ribosomal subunit protein uS11 from Synechococcus elongatus (strain ATCC 33912 / PCC 7942 / FACHB-805) (Anacystis nidulans R2).